The following is a 335-amino-acid chain: MPKSSNLKMQRKGSLRENGLVKGLNKNKFSISKLKELSHADDSRKSHRIIRSGKSSGEAYKQAGKGLMNLGNHLSDWGAKSSNLSLNDISDKIGVLVSELGETEIEFVKAFNENRIKFKAIRAMEDSIAPSRAHRQRLISSIEREEERDPLSPKLTDLQNQLVRTEAENLVGEMQLDNTSREVFKSSFQGLMDAFQLRAQKQMTLSYYASQLAELINDEVAYPGDNPAAYSQKYATQIMHQCVESMARLLAPVTSETTEHVGSDCEFTRKSSSSVEFSDHSQDSGDPSQQNILQVKNVQAVLSIPEAESYKAQLLSSIAEEQKKKELQAKSTVFL.

It is found in the cytoplasm. Its subcellular location is the cytoskeleton. The protein resides in the microtubule organizing center. The protein localises to the spindle pole body. It localises to the nucleus membrane. It is found in the prospore membrane. In terms of biological role, has a role in nuclear division during meiosis II where it stabilizes the proper segregation of the spindle pole bodies. Also has a role in the formation and extension of the forespore membrane. This is Meiotic expression up-regulated protein 14 (meu14) from Schizosaccharomyces pombe (strain 972 / ATCC 24843) (Fission yeast).